Consider the following 507-residue polypeptide: BPI fold-containing family C protein (507 aa).

The signal sequence occupies residues 1–23 (MCTKTIPVLWGCFLLWNLYVSSS). N79, N92, and N113 each carry an N-linked (GlcNAc...) asparagine glycan. C161 and C200 are oxidised to a cystine. Residues N213, N225, N257, N301, N355, N372, and N415 are each glycosylated (N-linked (GlcNAc...) asparagine).

Belongs to the BPI/LBP/Plunc superfamily. BPI/LBP family. Detected in the basal layer of the epidermis from inflammatory skin from psoriasis patients, but not in normal skin.

It localises to the secreted. The protein is BPI fold-containing family C protein (BPIFC) of Homo sapiens (Human).